A 484-amino-acid chain; its full sequence is 6-phosphogluconate dehydrogenase, decarboxylating (484 aa).

NADP(+)-binding positions include 11–16 (GLAVMG), 34–36 (NRT), 76–78 (VRA), and Asn104. Substrate is bound by residues Asn104 and 130–132 (SGG). Catalysis depends on Lys185, which acts as the Proton acceptor. 188-189 (HN) is a binding site for substrate. Glu192 (proton donor) is an active-site residue. Residues Tyr193, Lys262, Arg289, Arg447, and His453 each coordinate substrate.

Belongs to the 6-phosphogluconate dehydrogenase family. Homodimer.

The enzyme catalyses 6-phospho-D-gluconate + NADP(+) = D-ribulose 5-phosphate + CO2 + NADPH. It participates in carbohydrate degradation; pentose phosphate pathway; D-ribulose 5-phosphate from D-glucose 6-phosphate (oxidative stage): step 3/3. Catalyzes the oxidative decarboxylation of 6-phosphogluconate to ribulose 5-phosphate and CO(2), with concomitant reduction of NADP to NADPH. The chain is 6-phosphogluconate dehydrogenase, decarboxylating from Aggregatibacter actinomycetemcomitans (Actinobacillus actinomycetemcomitans).